A 279-amino-acid chain; its full sequence is 3-methyl-2-oxobutanoate hydroxymethyltransferase (279 aa).

Mg(2+) contacts are provided by Asp-43 and Asp-82. Residues 43–44 (DS), Asp-82, and Lys-112 each bind 3-methyl-2-oxobutanoate. Residue Glu-114 participates in Mg(2+) binding. The Proton acceptor role is filled by Glu-181.

Belongs to the PanB family. Homodecamer; pentamer of dimers. Mg(2+) serves as cofactor.

The protein localises to the cytoplasm. The catalysed reaction is 3-methyl-2-oxobutanoate + (6R)-5,10-methylene-5,6,7,8-tetrahydrofolate + H2O = 2-dehydropantoate + (6S)-5,6,7,8-tetrahydrofolate. Its pathway is cofactor biosynthesis; (R)-pantothenate biosynthesis; (R)-pantoate from 3-methyl-2-oxobutanoate: step 1/2. Functionally, catalyzes the reversible reaction in which hydroxymethyl group from 5,10-methylenetetrahydrofolate is transferred onto alpha-ketoisovalerate to form ketopantoate. In Lysinibacillus sphaericus (strain C3-41), this protein is 3-methyl-2-oxobutanoate hydroxymethyltransferase.